The chain runs to 85 residues: Beta-toxin BmKAs1 (85 aa).

Positions 1–19 are cleaved as a signal peptide; that stretch reads MKIIIFLIVCSFVLIGVKA. Residues 20–82 enclose the LCN-type CS-alpha/beta domain; that stretch reads DNGYLLNKYT…LWAYETNKCN (63 aa). Disulfide bonds link Cys31–Cys81, Cys35–Cys56, Cys42–Cys63, and Cys46–Cys65.

This sequence belongs to the long (4 C-C) scorpion toxin superfamily. Sodium channel inhibitor family. Post-translationally, a possible sulfoxide Met-85 on BmP09 could explain the difference of function between BmK AS-1 and BmP09. As to expression, expressed by the venom gland.

It is found in the secreted. In terms of biological role, beta toxins bind voltage-independently at site-4 of sodium channels (Nav) and shift the voltage of activation toward more negative potentials thereby affecting sodium channel activation and promoting spontaneous and repetitive firing. BmKAs1 also significantly stimulates the binding of [3H]-ryanodine to ryanodine receptors on the sarcoplasmic reticulum of the skeletal muscle. It also displays antinociceptive effect in rat models. Toxin BmP09 (which may be post-translationally modified) specifically and reversibly blocks large conductance calcium-dependent and voltage-dependent potassium channels (BK) but has no effect on sodium channels. The protein is Beta-toxin BmKAs1 of Olivierus martensii (Manchurian scorpion).